The following is a 164-amino-acid chain: 2-C-methyl-D-erythritol 2,4-cyclodiphosphate synthase (164 aa).

D8 and H10 together coordinate a divalent metal cation. Residues 8–10 (DVH) and 34–35 (HS) each bind 4-CDP-2-C-methyl-D-erythritol 2-phosphate. H42 lines the a divalent metal cation pocket. 4-CDP-2-C-methyl-D-erythritol 2-phosphate contacts are provided by residues 56–58 (DIG), 132–135 (TTEE), F139, and K142.

The protein belongs to the IspF family. In terms of assembly, homotrimer. It depends on a divalent metal cation as a cofactor.

It carries out the reaction 4-CDP-2-C-methyl-D-erythritol 2-phosphate = 2-C-methyl-D-erythritol 2,4-cyclic diphosphate + CMP. It participates in isoprenoid biosynthesis; isopentenyl diphosphate biosynthesis via DXP pathway; isopentenyl diphosphate from 1-deoxy-D-xylulose 5-phosphate: step 4/6. In terms of biological role, involved in the biosynthesis of isopentenyl diphosphate (IPP) and dimethylallyl diphosphate (DMAPP), two major building blocks of isoprenoid compounds. Catalyzes the conversion of 4-diphosphocytidyl-2-C-methyl-D-erythritol 2-phosphate (CDP-ME2P) to 2-C-methyl-D-erythritol 2,4-cyclodiphosphate (ME-CPP) with a corresponding release of cytidine 5-monophosphate (CMP). The chain is 2-C-methyl-D-erythritol 2,4-cyclodiphosphate synthase from Clostridium kluyveri (strain NBRC 12016).